Consider the following 130-residue polypeptide: MAKTNPSPPPAPERIAAFRTGLSAETRAAAYLMAKGYRILARRFRTPYGEIDIVAKKRGLVAFIEVKARAKLDDAAYAVTPRQQQRIVDAASAWLMTHPEHADLELRFDALLIAPRSLPRHLIAAFDAST.

Belongs to the UPF0102 family.

In Rhodopseudomonas palustris (strain BisA53), this protein is UPF0102 protein RPE_0358.